We begin with the raw amino-acid sequence, 71 residues long: Protein translocase subunit SecE (71 aa).

The helical transmembrane segment at 43-63 (VAGAGILAVGAVGFIIYVLLT) threads the bilayer.

This sequence belongs to the SecE/SEC61-gamma family. In terms of assembly, component of the Sec protein translocase complex. Heterotrimer consisting of SecY (alpha), SecG (beta) and SecE (gamma) subunits. The heterotrimers can form oligomers, although 1 heterotrimer is thought to be able to translocate proteins. Interacts with the ribosome. May interact with SecDF, and other proteins may be involved.

The protein localises to the cell membrane. Essential subunit of the Sec protein translocation channel SecYEG. Clamps together the 2 halves of SecY. May contact the channel plug during translocation. The chain is Protein translocase subunit SecE from Methanosarcina mazei (strain ATCC BAA-159 / DSM 3647 / Goe1 / Go1 / JCM 11833 / OCM 88) (Methanosarcina frisia).